Here is a 122-residue protein sequence, read N- to C-terminus: Large ribosomal subunit protein uL14 (122 aa).

The protein belongs to the universal ribosomal protein uL14 family. As to quaternary structure, part of the 50S ribosomal subunit. Forms a cluster with proteins L3 and L19. In the 70S ribosome, L14 and L19 interact and together make contacts with the 16S rRNA in bridges B5 and B8.

Functionally, binds to 23S rRNA. Forms part of two intersubunit bridges in the 70S ribosome. This is Large ribosomal subunit protein uL14 from Stutzerimonas stutzeri (strain A1501) (Pseudomonas stutzeri).